The primary structure comprises 289 residues: Kinetochore-associated protein MTW1 (289 aa).

Residues 105-147 are a coiled coil; the sequence is RLENQKDLVIVDENELKKSEEKLREKVNDVELAFKKNEMLLKR.

This sequence belongs to the mis12 family. In terms of assembly, component of the MIND kinetochore complex, which is composed of at least MTW1, NNF1, NSL1 and DSN1.

Its subcellular location is the chromosome. The protein resides in the centromere. It localises to the kinetochore. It is found in the cytoplasm. The protein localises to the cytoskeleton. Its subcellular location is the spindle pole. Functionally, acts as an essential component of the kinetochore MIND complex, which is required for the spindle checkpoint and kinetochore integrity. MIND plays a role in establishing a bipolar spindle-kinetochore interaction by joining kinetochore subunits contacting DNA to those contacting microtubules. The sequence is that of Kinetochore-associated protein MTW1 (MTW1) from Saccharomyces cerevisiae (strain ATCC 204508 / S288c) (Baker's yeast).